Reading from the N-terminus, the 442-residue chain is MLSDTICAIASGQINQAISIIRISGPNAFKIMEKIFLGKVGKSMEITFGWIHDDNQKIDQVLVLWFAGNKNFVGEDTVEINAHGGVLNTNLILELILKTKLARLANPGEFSLRAFLNGKIDLVKAQAINDLIHAEVKVQHQAALNQFLGKSSNFIKNLIEKIEEIIGIIEVNIDYPEYDDVEILTSDVLLPKINQLLADFDQLIKIANNSRLIYQGIKTCLVGAPNSGKSSLLNILINENKAIISEIPGTTRDVVEGNFVLDGLLFKLFDTAGIRKTTEKIEQIGIEKSYESIKKADLILHIIDASEKNRQNLDLKAKARPDQVYLKIYNKSDLLENQEEFKDEILISAKYQKIENLLEKIKSIFAFLGKNKEFVANSFQISQIELGKLAILDAKTSLESGFGPEIAIVDLRIAWKELKTIFGRVDDENLLDSIFSKFCLGK.

Residues Arg22, Glu79, and Lys119 each contribute to the (6S)-5-formyl-5,6,7,8-tetrahydrofolate site. One can recognise a TrmE-type G domain in the interval Gly216–Ala366. Position 226 (Asn226) interacts with K(+). Residues Asn226–Ser231, Ser245–Thr251, and Asp270–Gly273 each bind GTP. Residue Ser230 coordinates Mg(2+). Ser245, Ile247, and Thr250 together coordinate K(+). Mg(2+) is bound at residue Thr251. Lys442 lines the (6S)-5-formyl-5,6,7,8-tetrahydrofolate pocket.

Belongs to the TRAFAC class TrmE-Era-EngA-EngB-Septin-like GTPase superfamily. TrmE GTPase family. Homodimer. Heterotetramer of two MnmE and two MnmG subunits. The cofactor is K(+).

Its subcellular location is the cytoplasm. Exhibits a very high intrinsic GTPase hydrolysis rate. Involved in the addition of a carboxymethylaminomethyl (cmnm) group at the wobble position (U34) of certain tRNAs, forming tRNA-cmnm(5)s(2)U34. This is tRNA modification GTPase MnmE from Mesomycoplasma hyopneumoniae (strain 7448) (Mycoplasma hyopneumoniae).